A 362-amino-acid polypeptide reads, in one-letter code: Cobalt-precorrin-5B C(1)-methyltransferase (362 aa).

Belongs to the CbiD family.

The enzyme catalyses Co-precorrin-5B + S-adenosyl-L-methionine = Co-precorrin-6A + S-adenosyl-L-homocysteine. The protein operates within cofactor biosynthesis; adenosylcobalamin biosynthesis; cob(II)yrinate a,c-diamide from sirohydrochlorin (anaerobic route): step 6/10. Catalyzes the methylation of C-1 in cobalt-precorrin-5B to form cobalt-precorrin-6A. The protein is Cobalt-precorrin-5B C(1)-methyltransferase of Burkholderia cenocepacia (strain ATCC BAA-245 / DSM 16553 / LMG 16656 / NCTC 13227 / J2315 / CF5610) (Burkholderia cepacia (strain J2315)).